The following is a 255-amino-acid chain: MLRPLRKSVLASCRHCFKVCGGLPQKQLPLFSPLLLRARYSSTDSSTKRSNKSDKIDAPGFKKIFLVAIIGTVIFVKTVQSLDKNKPKTTLSEEEFENVVKGLKRRVAIFPQGEVDIKFSLSPSIEETRKVLQKSQGDDINELQFVDPVKVIDYYRTLRDDRYEALLNEYYKKYGCDTYAYNLPTGMLVMLLGRYFKENFKTGDKLVVVNFPHSIADATRFENEVSIVSKIFVPRKLSGSDVCKYYETVGKADII.

The transit peptide at 1–40 directs the protein to the mitochondrion; the sequence is MLRPLRKSVLASCRHCFKVCGGLPQKQLPLFSPLLLRARY. A helical membrane pass occupies residues 64-82; that stretch reads IFLVAIIGTVIFVKTVQSL.

Belongs to the AIM36 family.

Its subcellular location is the mitochondrion membrane. This Saccharomyces cerevisiae (strain ATCC 204508 / S288c) (Baker's yeast) protein is Altered inheritance of mitochondria protein 36, mitochondrial (AIM36).